A 395-amino-acid chain; its full sequence is Small ribosomal subunit protein mS31 (395 aa).

A mitochondrion-targeting transit peptide spans 1-65; it reads MFPRVSTFLP…IQRYFGTNSV (65 aa). 2 disordered regions span residues 70–97 and 175–196; these read KDKQ…NTKK and SELL…DAKR. Over residues 183 to 196 the composition is skewed to basic and acidic residues; it reads QHEEESRAQRDAKR.

This sequence belongs to the mitochondrion-specific ribosomal protein mS31 family. In terms of assembly, component of the mitochondrial small ribosomal subunit (mt-SSU). Mature mammalian 55S mitochondrial ribosomes consist of a small (28S) and a large (39S) subunit. The 28S small subunit contains a 12S ribosomal RNA (12S mt-rRNA) and 30 different proteins. The 39S large subunit contains a 16S rRNA (16S mt-rRNA), a copy of mitochondrial valine transfer RNA (mt-tRNA(Val)), which plays an integral structural role, and 52 different proteins.

It is found in the mitochondrion. The protein is Small ribosomal subunit protein mS31 (MRPS31) of Homo sapiens (Human).